The chain runs to 127 residues: MORF4 family-associated protein 1-like 1 (127 aa).

Positions 87–118 (GEADERVSELCEKAEEKAKEIAKMAEMLVELV) form a coiled coil.

The protein belongs to the MORF4 family-associated protein family.

In Homo sapiens (Human), this protein is MORF4 family-associated protein 1-like 1 (MRFAP1L1).